An 831-amino-acid chain; its full sequence is Probable glucan 1,3-beta-glucosidase D (831 aa).

Basic and acidic residues-rich tracts occupy residues 1-24 (MPSHSRSRDRYRGERDPSRRYREV), 44-56 (RRDDYQHDIRSHE), 79-93 (RSHDVEGRRRERSRA), 102-115 (SRRDRNRGGEEYRR), 137-151 (RDGQRARPRDMDREA), and 198-213 (QRERSQEQEQPRLESK). 2 disordered regions span residues 1-179 (MPSH…SGSH) and 192-241 (HYDE…GQSK). The Cytoplasmic portion of the chain corresponds to 1–297 (MPSHSRSRDR…AQPPFWKRKK (297 aa)). A helical; Signal-anchor for type II membrane protein membrane pass occupies residues 298 to 318 (WWIVIGVLVVVLAIVIPVAVV). Topologically, residues 319–831 (MSKKHGHDDD…PSFGDLPEYY (513 aa)) are extracellular. Asn-376, Asn-381, Asn-393, Asn-410, Asn-442, Asn-546, and Asn-558 each carry an N-linked (GlcNAc...) asparagine glycan. Glu-597 (proton donor) is an active-site residue. Residues Asn-610, Asn-636, Asn-669, and Asn-689 are each glycosylated (N-linked (GlcNAc...) asparagine). The Nucleophile role is filled by Glu-702.

Belongs to the glycosyl hydrolase 5 (cellulase A) family.

Its subcellular location is the cell membrane. The catalysed reaction is Successive hydrolysis of beta-D-glucose units from the non-reducing ends of (1-&gt;3)-beta-D-glucans, releasing alpha-glucose.. In terms of biological role, glucosidase involved in the degradation of cellulosic biomass. Active on lichenan. The chain is Probable glucan 1,3-beta-glucosidase D (exgD) from Aspergillus flavus (strain ATCC 200026 / FGSC A1120 / IAM 13836 / NRRL 3357 / JCM 12722 / SRRC 167).